A 29-amino-acid chain; its full sequence is Protamine-like protein (29 aa).

The tract at residues 1 to 29 (MRSFDQGSTRAPARERCRRQRPEGRSAQR) is disordered. The segment covering 12 to 29 (PARERCRRQRPEGRSAQR) has biased composition (basic and acidic residues).

The chain is Protamine-like protein (tpr) from Escherichia coli (strain K12).